The following is a 229-amino-acid chain: uncharacterized protein (229 aa).

Helical transmembrane passes span 21–41 (IYSL…LMLY), 56–76 (MIYY…SGAA), 83–103 (ALPI…FIIV), 109–129 (TVFQ…IIGV), 141–161 (AMFA…FIGS), 162–182 (GMMS…LIAS), and 202–222 (WAVA…ISLL).

The protein belongs to the BI1 family.

Its subcellular location is the cell membrane. This is an uncharacterized protein from Streptococcus pyogenes serotype M3 (strain ATCC BAA-595 / MGAS315).